The primary structure comprises 714 residues: Fimbrin-3 (714 aa).

Residues 7–55 (VIVSDPWLQSQLTQVELRSLNSKFVALKNQSGKVTLEDLPSVLVKVKSL) enclose the EF-hand domain. Calponin-homology (CH) domains lie at 124-241 (QSEK…KIQL), 269-372 (LPPE…HERN), 393-499 (CRDE…RTHM), and 514-622 (DMTD…YWSL). 2 actin-binding regions span residues 124 to 372 (QSEK…HERN) and 393 to 622 (CRDE…YWSL). Low complexity predominate over residues 628 to 662 (SSESSSSSSDSSSTHSTTTTCTSTCTSTDASPAPS). The interval 628–694 (SSESSSSSSD…NEVSSLTIEE (67 aa)) is disordered. A compositionally biased stretch (polar residues) spans 670–680 (SSLNGEVSSLT). The span at 681-694 (IEEDNEVSSLTIEE) shows a compositional bias: acidic residues.

Interacts with F-actin.

Its subcellular location is the cytoplasm. It localises to the cytoskeleton. Cross-links actin filaments (F-actin). Stabilizes and prevents F-actin depolymerization mediated by profilin. May regulate actin cytoarchitecture, cell cycle, cell division, cell elongation and cytoplasmic tractus. The protein is Fimbrin-3 of Arabidopsis thaliana (Mouse-ear cress).